Here is a 390-residue protein sequence, read N- to C-terminus: MNIHEYQAKEIFREYGVPVPRGEVAFTGPEAREVAQRLGGDLWVVKAQIHAGGRGKAGGVKLARSLDEVEKIAEEMLGMTLVTHQTGPEGKKVEKVYVEEGADIQKEYYLGMVLDRSSEMPVMMASTEGGMEIEEVAAKTPEKIIKVAIDPTIGFQGFHGRKLAFGLGLAKEEIRPFIQFAEALYKVYMDKDANLIEINPLIKTGDGRFLALDAKMGFDDNALYKHPDIHEMRDLSEEDPVEVEAAKYGLSYVNLDGNVGCMVNGAGLAMATMDIIKHEGGEPANFLDVGGGANPDTVAKGFELILSDENVKSIFVNIFGGIVRCDRIANGILQATQQVEVNVPVVVRLDGTNAEEAAQILKNANIKNIIPATDLADGARKAVAAAKGEL.

One can recognise an ATP-grasp domain in the interval 9–244 (KEIFREYGVP…LSEEDPVEVE (236 aa)). ATP contacts are provided by residues K46, 53 to 55 (GRG), E99, A102, and E107. Positions 199 and 213 each coordinate Mg(2+). Substrate is bound by residues N264 and 321 to 323 (GIV).

It belongs to the succinate/malate CoA ligase beta subunit family. In terms of assembly, heterotetramer of two alpha and two beta subunits. The cofactor is Mg(2+).

The catalysed reaction is succinate + ATP + CoA = succinyl-CoA + ADP + phosphate. The enzyme catalyses GTP + succinate + CoA = succinyl-CoA + GDP + phosphate. It participates in carbohydrate metabolism; tricarboxylic acid cycle; succinate from succinyl-CoA (ligase route): step 1/1. Succinyl-CoA synthetase functions in the citric acid cycle (TCA), coupling the hydrolysis of succinyl-CoA to the synthesis of either ATP or GTP and thus represents the only step of substrate-level phosphorylation in the TCA. The beta subunit provides nucleotide specificity of the enzyme and binds the substrate succinate, while the binding sites for coenzyme A and phosphate are found in the alpha subunit. The sequence is that of Succinate--CoA ligase [ADP-forming] subunit beta from Nitratiruptor sp. (strain SB155-2).